Consider the following 535-residue polypeptide: uncharacterized protein (535 aa).

A run of 6 helical transmembrane segments spans residues 55–75, 82–102, 115–135, 143–163, 201–221, and 346–366; these read LITIICHLFLLLNIFISIPII, FMPVGFTALAAILLAMQIMFV, IICFLLAIDVLVVFLSPILRH, AFVLWAFLMSLWIVITDLMLF, STILSVILTILTIHTLVTLIM, and VSGPYVLVAHGIGGVYSNVFA.

The protein resides in the membrane. This is an uncharacterized protein from Schizosaccharomyces pombe (strain 972 / ATCC 24843) (Fission yeast).